Here is a 1178-residue protein sequence, read N- to C-terminus: DNA-directed RNA polymerase I subunit 2 (1178 aa).

The C4-type zinc finger occupies cysteine 1097–cysteine 1137.

The protein belongs to the RNA polymerase beta chain family. As to quaternary structure, component of the RNA polymerase I (Pol I) complex consisting of at least 13 subunits.

It is found in the nucleus. It carries out the reaction RNA(n) + a ribonucleoside 5'-triphosphate = RNA(n+1) + diphosphate. In terms of biological role, DNA-dependent RNA polymerase catalyzes the transcription of DNA into RNA using the four ribonucleoside triphosphates as substrates. Second largest core component of RNA polymerase I which synthesizes ribosomal RNA precursors. Proposed to contribute to the polymerase catalytic activity and forms the polymerase active center together with the largest subunit. Pol I is composed of mobile elements and NRPA2 is part of the core element with the central large cleft and probably a clamp element that moves to open and close the cleft. Essential for the completion of the three rounds of mitosis in female megaspores required for the development of mature gametophytes. The sequence is that of DNA-directed RNA polymerase I subunit 2 from Arabidopsis thaliana (Mouse-ear cress).